The following is an 85-amino-acid chain: ATP synthase subunit c (85 aa).

Transmembrane regions (helical) follow at residues 10–30 and 53–73; these read IAVAIMIGLAALGTGIGFAIL and FIVAGLLDAISMIAVGVALFF.

It belongs to the ATPase C chain family. In terms of assembly, F-type ATPases have 2 components, F(1) - the catalytic core - and F(0) - the membrane proton channel. F(1) has five subunits: alpha(3), beta(3), gamma(1), delta(1), epsilon(1). F(0) has three main subunits: a(1), b(2) and c(10-14). The alpha and beta chains form an alternating ring which encloses part of the gamma chain. F(1) is attached to F(0) by a central stalk formed by the gamma and epsilon chains, while a peripheral stalk is formed by the delta and b chains.

It localises to the cell inner membrane. In terms of biological role, f(1)F(0) ATP synthase produces ATP from ADP in the presence of a proton or sodium gradient. F-type ATPases consist of two structural domains, F(1) containing the extramembraneous catalytic core and F(0) containing the membrane proton channel, linked together by a central stalk and a peripheral stalk. During catalysis, ATP synthesis in the catalytic domain of F(1) is coupled via a rotary mechanism of the central stalk subunits to proton translocation. Key component of the F(0) channel; it plays a direct role in translocation across the membrane. A homomeric c-ring of between 10-14 subunits forms the central stalk rotor element with the F(1) delta and epsilon subunits. This Shewanella halifaxensis (strain HAW-EB4) protein is ATP synthase subunit c.